A 49-amino-acid chain; its full sequence is DNA-directed RNA polymerase subunit Rpo12 (49 aa).

Zn(2+)-binding residues include Cys11, Cys27, and Cys30.

The protein belongs to the archaeal Rpo12/eukaryotic RPC10 RNA polymerase subunit family. In terms of assembly, part of the RNA polymerase complex. The cofactor is Zn(2+).

It is found in the cytoplasm. The enzyme catalyses RNA(n) + a ribonucleoside 5'-triphosphate = RNA(n+1) + diphosphate. Its function is as follows. DNA-dependent RNA polymerase (RNAP) catalyzes the transcription of DNA into RNA using the four ribonucleoside triphosphates as substrates. The chain is DNA-directed RNA polymerase subunit Rpo12 from Pyrococcus horikoshii (strain ATCC 700860 / DSM 12428 / JCM 9974 / NBRC 100139 / OT-3).